The sequence spans 500 residues: Histidine--tRNA ligase (500 aa).

The protein belongs to the class-II aminoacyl-tRNA synthetase family. Homodimer.

It localises to the cytoplasm. The enzyme catalyses tRNA(His) + L-histidine + ATP = L-histidyl-tRNA(His) + AMP + diphosphate + H(+). The sequence is that of Histidine--tRNA ligase from Ruegeria sp. (strain TM1040) (Silicibacter sp.).